A 21-amino-acid polypeptide reads, in one-letter code: Venom peptide Ocy4 (21 aa).

In terms of tissue distribution, expressed by the venom gland.

The protein localises to the secreted. This chain is Venom peptide Ocy4, found in Opisthacanthus cayaporum (South American scorpion).